A 155-amino-acid chain; its full sequence is Interleukin-2 (155 aa).

Positions 1 to 20 (MYKIQLLSCIALTLALVANG) are cleaved as a signal peptide. Residue Thr-23 is glycosylated (O-linked (GalNAc...) threonine). Cys-79 and Cys-127 form a disulfide bridge.

This sequence belongs to the IL-2 family.

The protein resides in the secreted. Functionally, cytokine produced by activated CD4-positive helper T-cells and to a lesser extend activated CD8-positive T-cells and natural killer (NK) cells that plays pivotal roles in the immune response and tolerance. Binds to a receptor complex composed of either the high-affinity trimeric IL-2R (IL2RA/CD25, IL2RB/CD122 and IL2RG/CD132) or the low-affinity dimeric IL-2R (IL2RB and IL2RG). Interaction with the receptor leads to oligomerization and conformation changes in the IL-2R subunits resulting in downstream signaling starting with phosphorylation of JAK1 and JAK3. In turn, JAK1 and JAK3 phosphorylate the receptor to form a docking site leading to the phosphorylation of several substrates including STAT5. This process leads to activation of several pathways including STAT, phosphoinositide-3-kinase/PI3K and mitogen-activated protein kinase/MAPK pathways. Functions as a T-cell growth factor and can increase NK-cell cytolytic activity as well. Promotes strong proliferation of activated B-cells and subsequently immunoglobulin production. Plays a pivotal role in regulating the adaptive immune system by controlling the survival and proliferation of regulatory T-cells, which are required for the maintenance of immune tolerance. Moreover, participates in the differentiation and homeostasis of effector T-cell subsets, including Th1, Th2, Th17 as well as memory CD8-positive T-cells. This chain is Interleukin-2 (IL2), found in Ovis aries (Sheep).